The primary structure comprises 298 residues: Tyrosine recombinase XerD (298 aa).

Residues 3-88 (SSHNNLLQNF…AIRQFYKFLK (86 aa)) form the Core-binding (CB) domain. In terms of domain architecture, Tyr recombinase spans 109 to 292 (SIPDYLTQDE…ANKTLREVHK (184 aa)). Residues Arg-149, Lys-173, His-244, Arg-247, and His-270 contribute to the active site. Tyr-279 acts as the O-(3'-phospho-DNA)-tyrosine intermediate in catalysis.

Belongs to the 'phage' integrase family. XerD subfamily. As to quaternary structure, forms a cyclic heterotetrameric complex composed of two molecules of XerC and two molecules of XerD.

Its subcellular location is the cytoplasm. Functionally, site-specific tyrosine recombinase, which acts by catalyzing the cutting and rejoining of the recombining DNA molecules. The XerC-XerD complex is essential to convert dimers of the bacterial chromosome into monomers to permit their segregation at cell division. It also contributes to the segregational stability of plasmids. The protein is Tyrosine recombinase XerD of Leptospira interrogans serogroup Icterohaemorrhagiae serovar copenhageni (strain Fiocruz L1-130).